A 367-amino-acid chain; its full sequence is Bi-functional coumaroyl CoA and feruloyl CoA ortho-hydroxylase Diox4 (367 aa).

The 111-residue stretch at 207 to 317 (IREPMLVGSR…RISVPLFVNP (111 aa)) folds into the Fe2OG dioxygenase domain. Position 223 (Tyr-223) interacts with 2-oxoglutarate. 3 residues coordinate Fe cation: His-238, Asp-240, and His-298. 2-oxoglutarate contacts are provided by Arg-308 and Ser-310.

It belongs to the iron/ascorbate-dependent oxidoreductase family. It depends on L-ascorbate as a cofactor. Fe(2+) is required as a cofactor.

It carries out the reaction (E)-4-coumaroyl-CoA + 2-oxoglutarate + O2 = (E)-2,4-dihydroxycinnamoyl-CoA + succinate + CO2. The enzyme catalyses (E)-feruloyl-CoA + 2-oxoglutarate + O2 = (E)-6-hydroxyferuloyl-CoA + succinate + CO2. The protein operates within phenylpropanoid metabolism. With respect to regulation, repressed by the competitive inhibitor psoralen, but not by umbelliferone, xanthotoxin, bergapten and isopimpinellin. Its function is as follows. 2-oxoglutarate (OG)- and Fe(II)-dependent dioxygenase (2OGD) involved in scopoletin and umbelliferone biosynthesis. Converts feruloyl CoA into 6'-hydroxyferuloyl CoA, and p-coumaroyl CoA into 2,4-dihydroxycinnamoyl-CoA. Has no activity with cinnamic acid, caffeic acid, p-coumaric acid, ferulic acid, cinnamoyl-CoA and caffeoyl-CoA. The sequence is that of Bi-functional coumaroyl CoA and feruloyl CoA ortho-hydroxylase Diox4 from Ruta graveolens (Common rue).